Consider the following 57-residue polypeptide: Gene 19.3 protein (57 aa).

This is Gene 19.3 protein (19.3) from Escherichia coli (Bacteriophage T3).